The chain runs to 435 residues: MFILTMGLNHHTAPIDIREKLVFKETEEEMALVTLLQEKSILENVIISTCNRTEIVAVVDQIHTGRYYLKRFMANWFQMDMEKIEPYLFFHEEAEAVNHLYKVTAGLDSLVLGETQILGQVKHAFEIAKQTGTTGTLLNKLFREVVTFAKKVHHHTKINENAVSVSYAAVEVAKKLYGSLDNKKIVLIGAGEMSELALQNLAGSGIADITIINRTKSNAEILAHQFQAKVGAYENMSDHLLEADIVLVSTSAEEPIIKQVAMQELMEQKASSMLVIDIGLPRNVEHDCSYIPNFHLYDIDDLAGVVSANSLERQRIVQELENTIETEVRSFFEWEKQLGVVPVIRALREKALDMQEVTMTSLENKLPGLTEREYIQIGKHMKSIINQMLKQPISELKEMSVEENADTSIEHFKRIFGLTETDVAIIEKEQAETRS.

Residues 49-52 (TCNR), Ser-109, 114-116 (ETQ), and Gln-120 each bind substrate. Cys-50 functions as the Nucleophile in the catalytic mechanism. 189–194 (GAGEMS) contributes to the NADP(+) binding site.

The protein belongs to the glutamyl-tRNA reductase family. Homodimer.

It carries out the reaction (S)-4-amino-5-oxopentanoate + tRNA(Glu) + NADP(+) = L-glutamyl-tRNA(Glu) + NADPH + H(+). It functions in the pathway porphyrin-containing compound metabolism; protoporphyrin-IX biosynthesis; 5-aminolevulinate from L-glutamyl-tRNA(Glu): step 1/2. Functionally, catalyzes the NADPH-dependent reduction of glutamyl-tRNA(Glu) to glutamate 1-semialdehyde (GSA). The sequence is that of Glutamyl-tRNA reductase from Listeria innocua serovar 6a (strain ATCC BAA-680 / CLIP 11262).